The sequence spans 123 residues: Large ribosomal subunit protein bL20 (123 aa).

It belongs to the bacterial ribosomal protein bL20 family.

Functionally, binds directly to 23S ribosomal RNA and is necessary for the in vitro assembly process of the 50S ribosomal subunit. It is not involved in the protein synthesizing functions of that subunit. This Ehrlichia ruminantium (strain Gardel) protein is Large ribosomal subunit protein bL20.